Here is a 239-residue protein sequence, read N- to C-terminus: Proteasome activator complex subunit 2 (239 aa).

An N-acetylalanine modification is found at Ala-2. Ser-10 carries the phosphoserine modification. The disordered stretch occupies residues 65–86 (DIPIPDPPPKDDEMETDKQEKK). The segment covering 72–86 (PPKDDEMETDKQEKK) has biased composition (basic and acidic residues).

Belongs to the PA28 family. As to quaternary structure, heterodimer of PSME1 and PSME2, which forms a hexameric ring.

In terms of biological role, implicated in immunoproteasome assembly and required for efficient antigen processing. The PA28 activator complex enhances the generation of class I binding peptides by altering the cleavage pattern of the proteasome. The sequence is that of Proteasome activator complex subunit 2 (PSME2) from Bos taurus (Bovine).